The sequence spans 305 residues: Tyrosine recombinase XerC (305 aa).

Residues 4 to 95 (TSIQALINKW…AVKNFYRFLE (92 aa)) enclose the Core-binding (CB) domain. The Tyr recombinase domain occupies 116 to 298 (LLPKALSEDD…SIKHLEAVYT (183 aa)). Catalysis depends on residues Arg-159, Lys-182, His-250, Arg-253, and His-276. Catalysis depends on Tyr-285, which acts as the O-(3'-phospho-DNA)-tyrosine intermediate.

The protein belongs to the 'phage' integrase family. XerC subfamily. As to quaternary structure, forms a cyclic heterotetrameric complex composed of two molecules of XerC and two molecules of XerD.

It localises to the cytoplasm. In terms of biological role, site-specific tyrosine recombinase, which acts by catalyzing the cutting and rejoining of the recombining DNA molecules. The XerC-XerD complex is essential to convert dimers of the bacterial chromosome into monomers to permit their segregation at cell division. It also contributes to the segregational stability of plasmids. The protein is Tyrosine recombinase XerC of Rickettsia conorii (strain ATCC VR-613 / Malish 7).